Here is a 457-residue protein sequence, read N- to C-terminus: Multidrug resistance protein MdtK (457 aa).

Transmembrane regions (helical) follow at residues 11-31 (LLALAIPVIIAQVAQTSMGFV), 53-73 (IWLPAILFGHGLLLALTPVIA), 93-113 (WLAGFVSILIMVVLWNAGYII), 127-147 (AVGYLRALLWGAPGYLFFQVA), 160-180 (GMVMGFIGLLVNIPVNYIFIY), 189-209 (GGVGCGVATAAVYWVMFFSMI), 243-263 (LPIALALFFEVTLFAVVALLV), 276-296 (IALNFSSLMFVLPMSLAAAVT), 314-334 (AARTGLGVGVCMAFCTALFTV), 357-377 (LMLLAAIYQLSDSIQVIGSGI), 387-407 (IFFITFTAYWVLGLPTGYILA), and 418-438 (PAGFWMGFIIGLTSAAILMML).

This sequence belongs to the multi antimicrobial extrusion (MATE) (TC 2.A.66.1) family. MdtK subfamily.

It is found in the cell inner membrane. Its function is as follows. Multidrug efflux pump that functions probably as a Na(+)/drug antiporter. This Enterobacter sp. (strain 638) protein is Multidrug resistance protein MdtK.